The following is an 87-amino-acid chain: MNSLLMITACLFLIGTVWAKEGYLVNKSTGCKYGCLLLGKNEGCDKECKAKNQGGSYGYCYAFGCWCEGLPESTPTYPLPNKSCSKK.

Positions 1–19 (MNSLLMITACLFLIGTVWA) are cleaved as a signal peptide. One can recognise an LCN-type CS-alpha/beta domain in the interval 20–85 (KEGYLVNKST…TYPLPNKSCS (66 aa)). 4 disulfides stabilise this stretch: C31-C84, C35-C60, C44-C65, and C48-C67.

Belongs to the long (4 C-C) scorpion toxin superfamily. Sodium channel inhibitor family. Beta subfamily. In terms of tissue distribution, expressed by the venom gland.

It is found in the secreted. Functionally, beta toxins bind voltage-independently at site-4 of sodium channels (Nav) and shift the voltage of activation toward more negative potentials thereby affecting sodium channel activation and promoting spontaneous and repetitive firing. This toxin is lethal to crustaceans (freshwater crayfish (Cambarellus montezumae spp.)), it provokes a reversible paralysis to insects (crickets (Achaeta spp.)), but is not toxic to mice. At high concentrations, it does displace the (beta) mammal-specific toxin Cn2 from rat brain synaptosomes. The chain is Beta-toxin Cn5 from Centruroides noxius (Mexican scorpion).